The following is a 637-amino-acid chain: Glutamate--cysteine ligase catalytic subunit (637 aa).

Met-1 bears the N-acetylmethionine mark. A phosphoserine mark is found at Ser-5 and Ser-8.

This sequence belongs to the glutamate--cysteine ligase type 3 family. Heterodimer of a catalytic heavy chain and a regulatory light chain.

It catalyses the reaction L-cysteine + L-glutamate + ATP = gamma-L-glutamyl-L-cysteine + ADP + phosphate + H(+). It carries out the reaction (2S)-2-aminobutanoate + L-glutamate + ATP = gamma-L-glutamyl-(2S)-2-aminobutanoate + ADP + phosphate + H(+). It participates in sulfur metabolism; glutathione biosynthesis; glutathione from L-cysteine and L-glutamate: step 1/2. With respect to regulation, feedback inhibition by glutathione. Functionally, catalyzes the ATP-dependent ligation of L-glutamate and L-cysteine and participates in the first and rate-limiting step in glutathione biosynthesis. The protein is Glutamate--cysteine ligase catalytic subunit of Mus musculus (Mouse).